The sequence spans 265 residues: Pyrroline-5-carboxylate reductase (265 aa).

It belongs to the pyrroline-5-carboxylate reductase family.

It localises to the cytoplasm. It catalyses the reaction L-proline + NADP(+) = (S)-1-pyrroline-5-carboxylate + NADPH + 2 H(+). It carries out the reaction L-proline + NAD(+) = (S)-1-pyrroline-5-carboxylate + NADH + 2 H(+). It participates in amino-acid biosynthesis; L-proline biosynthesis; L-proline from L-glutamate 5-semialdehyde: step 1/1. In terms of biological role, catalyzes the reduction of 1-pyrroline-5-carboxylate (PCA) to L-proline. This chain is Pyrroline-5-carboxylate reductase, found in Aquifex aeolicus (strain VF5).